The sequence spans 323 residues: Olfactory receptor 52B2 (323 aa).

Residues 1-27 (MSHTNVTIFHPAVFVLPGIPGLEAYHI) are Extracellular-facing. Asparagine 5 carries an N-linked (GlcNAc...) asparagine glycan. Residues 28-48 (WLSIPLCLIYITAVLGNSILI) traverse the membrane as a helical segment. The Cytoplasmic segment spans residues 49 to 56 (VVIVMERN). A helical membrane pass occupies residues 57 to 77 (LHVPMYFFLSMLAVMDILLST). The Extracellular portion of the chain corresponds to 78 to 101 (TTVPKALAIFWLQAHNIAFDACVT). The cysteines at positions 99 and 191 are disulfide-linked. A helical membrane pass occupies residues 102–122 (QGFFVHMMFVGESAILLAMAF). Topologically, residues 123–141 (DRFVAICAPLRYTTVLTWP) are cytoplasmic. The chain crosses the membrane as a helical span at residues 142 to 162 (VVGRIALAVITRSFCIIFPVI). Over 163-198 (FLLKRLPFCLTNIVPHSYCEHIGVARLACADITVNI) the chain is Extracellular. The helical transmembrane segment at 199–219 (WYGFSVPIVMVILDVILIAVS) threads the bilayer. At 220–239 (YSLILRAVFRLPSQDARHKA) the chain is on the cytoplasmic side. A helical transmembrane segment spans residues 240-260 (LSTCGSHLCVILMFYVPSFFT). Topologically, residues 261 to 275 (LLTHHFGRNIPQHVH) are extracellular. A helical transmembrane segment spans residues 276 to 296 (ILLANLYVAVPPMLNPIVYGV). Residues 297–323 (KTKQIREGVAHRFFDIKTWCCTSPLGS) lie on the Cytoplasmic side of the membrane.

It belongs to the G-protein coupled receptor 1 family.

Its subcellular location is the cell membrane. In terms of biological role, odorant receptor. This is Olfactory receptor 52B2 (OR52B2) from Homo sapiens (Human).